A 270-amino-acid chain; its full sequence is Pre-mRNA-splicing factor CWC23 (270 aa).

The J domain occupies 12-84 (DLYRILHIHV…EHKKEYDIWY (73 aa)).

Belongs to the DnaJ family. In terms of assembly, associated with the spliceosome.

Its subcellular location is the cytoplasm. The protein localises to the nucleus. Functionally, involved in pre-mRNA splicing. May be involved in endoplasmic reticulum-associated protein degradation (ERAD) and required for growth at low and high temperatures. The chain is Pre-mRNA-splicing factor CWC23 (CWC23) from Kluyveromyces lactis (strain ATCC 8585 / CBS 2359 / DSM 70799 / NBRC 1267 / NRRL Y-1140 / WM37) (Yeast).